Here is a 461-residue protein sequence, read N- to C-terminus: Fumarate hydratase class II (461 aa).

Substrate-binding positions include Ser-97 to Thr-99, Arg-125, His-128 to Asp-131, Ser-138 to Asn-140, and Thr-186. His-187 acts as the Proton donor/acceptor in catalysis. Residue Ser-317 is part of the active site. Residues Ser-318 and Lys-323–Asn-325 contribute to the substrate site.

The protein belongs to the class-II fumarase/aspartase family. Fumarase subfamily. As to quaternary structure, homotetramer.

The protein localises to the cytoplasm. The enzyme catalyses (S)-malate = fumarate + H2O. The protein operates within carbohydrate metabolism; tricarboxylic acid cycle; (S)-malate from fumarate: step 1/1. Its function is as follows. Involved in the TCA cycle. Catalyzes the stereospecific interconversion of fumarate to L-malate. The sequence is that of Fumarate hydratase class II from Ralstonia nicotianae (strain ATCC BAA-1114 / GMI1000) (Ralstonia solanacearum).